The sequence spans 451 residues: Serine/threonine-protein phosphatase 2A 55 kDa regulatory subunit B delta isoform (451 aa).

WD repeat units follow at residues 30-69 (AEAD…KSRP), 95-136 (EIEE…KRAE), 179-217 (AHTY…RSFN), 228-268 (ELTE…LCDR), 287-325 (EIIS…RPVE), 342-383 (ENDC…DITL), and 418-451 (DFNK…DKIN).

This sequence belongs to the phosphatase 2A regulatory subunit B family. In terms of assembly, PP2A consists of a common heterodimeric core enzyme, composed of a 36 kDa catalytic subunit (subunit C) and a 65 kDa constant regulatory subunit (PR65 or subunit A), that associates with a variety of regulatory subunits.

It localises to the cytoplasm. Substrate-recognition subunit of protein phosphatase 2A (PP2A) that plays a key role in cell cycle by controlling mitosis entry and exit. The activity of PP2A complexes containing PPP2R2D (PR55-delta) fluctuate during the cell cycle: the activity is high in interphase and low in mitosis. This chain is Serine/threonine-protein phosphatase 2A 55 kDa regulatory subunit B delta isoform (PPP2R2D), found in Gallus gallus (Chicken).